The following is a 308-amino-acid chain: Probable GTP 3',8-cyclase (308 aa).

Residues 4-224 (RFGRPLEDLR…QIRKKHFRPR (221 aa)) enclose the Radical SAM core domain. Residue R13 participates in GTP binding. Positions 20, 24, and 27 each coordinate [4Fe-4S] cluster. Residue K60 participates in GTP binding. G64 contributes to the S-adenosyl-L-methionine binding site. A GTP-binding site is contributed by T90. S114 is a binding site for S-adenosyl-L-methionine. GTP is bound at residue K151. [4Fe-4S] cluster contacts are provided by C245 and C248. 250 to 252 (RIR) serves as a coordination point for GTP. Residue C262 participates in [4Fe-4S] cluster binding.

It belongs to the radical SAM superfamily. MoaA family. [4Fe-4S] cluster serves as cofactor.

The catalysed reaction is GTP + AH2 + S-adenosyl-L-methionine = (8S)-3',8-cyclo-7,8-dihydroguanosine 5'-triphosphate + 5'-deoxyadenosine + L-methionine + A + H(+). It participates in cofactor biosynthesis; molybdopterin biosynthesis. Functionally, catalyzes the cyclization of GTP to (8S)-3',8-cyclo-7,8-dihydroguanosine 5'-triphosphate. The chain is Probable GTP 3',8-cyclase from Saccharolobus islandicus (strain Y.N.15.51 / Yellowstone #2) (Sulfolobus islandicus).